The chain runs to 376 residues: Probable allantoicase (376 aa).

The protein belongs to the allantoicase family.

It carries out the reaction allantoate + H2O = (S)-ureidoglycolate + urea. The protein operates within nitrogen metabolism; (S)-allantoin degradation; (S)-ureidoglycolate from allantoate (aminidohydrolase route): step 1/1. In Streptomyces avermitilis (strain ATCC 31267 / DSM 46492 / JCM 5070 / NBRC 14893 / NCIMB 12804 / NRRL 8165 / MA-4680), this protein is Probable allantoicase.